Reading from the N-terminus, the 297-residue chain is Mycothiol acetyltransferase (297 aa).

2 consecutive N-acetyltransferase domains span residues aspartate 8 to proline 153 and valine 156 to leucine 297. Glutamate 36 provides a ligand contact to 1D-myo-inositol 2-(L-cysteinylamino)-2-deoxy-alpha-D-glucopyranoside. Residue leucine 80–valine 82 participates in acetyl-CoA binding. Positions 183, 223, and 231 each coordinate 1D-myo-inositol 2-(L-cysteinylamino)-2-deoxy-alpha-D-glucopyranoside. Acetyl-CoA is bound by residues valine 235–valine 237 and glutamine 242–lysine 248. Tyrosine 269 serves as a coordination point for 1D-myo-inositol 2-(L-cysteinylamino)-2-deoxy-alpha-D-glucopyranoside. Asparagine 274–arginine 279 provides a ligand contact to acetyl-CoA.

The protein belongs to the acetyltransferase family. MshD subfamily. In terms of assembly, monomer.

The enzyme catalyses 1D-myo-inositol 2-(L-cysteinylamino)-2-deoxy-alpha-D-glucopyranoside + acetyl-CoA = mycothiol + CoA + H(+). Its function is as follows. Catalyzes the transfer of acetyl from acetyl-CoA to desacetylmycothiol (Cys-GlcN-Ins) to form mycothiol. The protein is Mycothiol acetyltransferase of Actinosynnema mirum (strain ATCC 29888 / DSM 43827 / JCM 3225 / NBRC 14064 / NCIMB 13271 / NRRL B-12336 / IMRU 3971 / 101).